We begin with the raw amino-acid sequence, 802 residues long: Phenylalanine--tRNA ligase beta subunit (802 aa).

The tRNA-binding domain occupies 40-155 (SASLKNVVVG…EHVETGVSAI (116 aa)). The 76-residue stretch at 409–484 (KAVNKIETSL…RIYGYDEIPV (76 aa)) folds into the B5 domain. Asp-462, Asp-468, Glu-471, and Glu-472 together coordinate Mg(2+). Positions 709 to 802 (PRYPEMTRDL…LQAKLHAIIR (94 aa)) constitute an FDX-ACB domain.

Belongs to the phenylalanyl-tRNA synthetase beta subunit family. Type 1 subfamily. In terms of assembly, tetramer of two alpha and two beta subunits. Mg(2+) is required as a cofactor.

It localises to the cytoplasm. It catalyses the reaction tRNA(Phe) + L-phenylalanine + ATP = L-phenylalanyl-tRNA(Phe) + AMP + diphosphate + H(+). This Listeria innocua serovar 6a (strain ATCC BAA-680 / CLIP 11262) protein is Phenylalanine--tRNA ligase beta subunit.